The chain runs to 519 residues: Cyclic AMP-responsive element-binding protein 3-like protein 2 (519 aa).

Residues 1–374 (MEIMDSGEPF…SCRVTGTQTS (374 aa)) lie on the Cytoplasmic side of the membrane. 3 disordered regions span residues 58–77 (GRGD…PVPP), 85–121 (YSLC…MEQE), and 193–261 (GLEC…SGPL). Residues 109–119 (ADSESDEWPME) show a composition bias toward acidic residues. Low complexity-rich tracts occupy residues 205-217 (SSVG…SQSP) and 240-249 (PSSLSSSPLL). In terms of domain architecture, bZIP spans 291–354 (ALKKIRRKIK…KSLLQQLHSL (64 aa)). The basic motif stretch occupies residues 293–322 (KKIRRKIKNKISAQESRRKKKEYVDALEKK). The interval 333-354 (LRRKVENLECTNKSLLQQLHSL) is leucine-zipper. The helical; Signal-anchor for type II membrane protein transmembrane segment at 375–395 (TCLMVVVLCFSLFLGSFYPGL) threads the bilayer. The Lumenal portion of the chain corresponds to 396–519 (SPCSSITKAD…QLDRTVNETS (124 aa)). The short motif at 423-426 (RSLL) is the S1P recognition element. 3 N-linked (GlcNAc...) asparagine glycosylation sites follow: asparagine 485, asparagine 503, and asparagine 516.

This sequence belongs to the bZIP family. ATF subfamily. In terms of assembly, binds DNA as a dimer. In terms of processing, upon ER stress, translocated to the Golgi apparatus, where it is processed by regulated intramembrane proteolysis (RIP) to release the cytosol-facing N-terminal transcription factor domain. The cleavage is performed sequentially by site-1 and site-2 proteases (S1P/mbtps1 and S2P/mbtps2).

It is found in the endoplasmic reticulum membrane. The protein resides in the nucleus. Functionally, transcription factor involved in unfolded protein response (UPR). In the absence of endoplasmic reticulum (ER) stress, inserted into ER membranes, with N-terminal DNA-binding and transcription activation domains oriented toward the cytosolic face of the membrane. In response to ER stress, transported to the Golgi, where it is cleaved in a site-specific manner by resident proteases S1P/mbtps1 and S2P/mbtps2. The released N-terminal cytosolic domain is translocated to the nucleus to effect transcription of specific target genes. Plays a critical role in chondrogenesis. May protect neuroblastoma cells from ER stress-induced death. In vitro activates transcription of target genes via direct binding to the CRE site. This chain is Cyclic AMP-responsive element-binding protein 3-like protein 2 (creb3l2), found in Danio rerio (Zebrafish).